A 602-amino-acid chain; its full sequence is UvrABC system protein C (602 aa).

The GIY-YIG domain maps to 15 to 92 (DLPGSYQMKD…IQKYQPYYNI (78 aa)). The UVR domain maps to 197-232 (GKAKASLTAKMERAAKNLQFERAAEIRDQLHYIEQT).

The protein belongs to the UvrC family. As to quaternary structure, interacts with UvrB in an incision complex.

The protein localises to the cytoplasm. Its function is as follows. The UvrABC repair system catalyzes the recognition and processing of DNA lesions. UvrC both incises the 5' and 3' sides of the lesion. The N-terminal half is responsible for the 3' incision and the C-terminal half is responsible for the 5' incision. This chain is UvrABC system protein C, found in Lacticaseibacillus paracasei (strain ATCC 334 / BCRC 17002 / CCUG 31169 / CIP 107868 / KCTC 3260 / NRRL B-441) (Lactobacillus paracasei).